The sequence spans 314 residues: Methionyl-tRNA formyltransferase (314 aa).

113-116 contributes to the (6S)-5,6,7,8-tetrahydrofolate binding site; the sequence is SLLP.

Belongs to the Fmt family.

It carries out the reaction L-methionyl-tRNA(fMet) + (6R)-10-formyltetrahydrofolate = N-formyl-L-methionyl-tRNA(fMet) + (6S)-5,6,7,8-tetrahydrofolate + H(+). Attaches a formyl group to the free amino group of methionyl-tRNA(fMet). The formyl group appears to play a dual role in the initiator identity of N-formylmethionyl-tRNA by promoting its recognition by IF2 and preventing the misappropriation of this tRNA by the elongation apparatus. This is Methionyl-tRNA formyltransferase from Pseudomonas aeruginosa (strain ATCC 15692 / DSM 22644 / CIP 104116 / JCM 14847 / LMG 12228 / 1C / PRS 101 / PAO1).